Consider the following 154-residue polypeptide: Superoxide dismutase [Cu-Zn] (154 aa).

Cu cation-binding residues include His47, His49, and His64. Cys58 and Cys147 are disulfide-bonded. Residues His64, His72, His81, and Asp84 each coordinate Zn(2+). His121 contributes to the Cu cation binding site. Over residues 124–137 (TDDLGRGDSEESKK) the composition is skewed to basic and acidic residues. The tract at residues 124-144 (TDDLGRGDSEESKKTGNAGAR) is disordered. Arg144 provides a ligand contact to substrate.

This sequence belongs to the Cu-Zn superoxide dismutase family. In terms of assembly, homodimer. The cofactor is Cu cation. It depends on Zn(2+) as a cofactor.

The protein localises to the cytoplasm. It catalyses the reaction 2 superoxide + 2 H(+) = H2O2 + O2. In terms of biological role, destroys radicals which are normally produced within the cells and which are toxic to biological systems. The polypeptide is Superoxide dismutase [Cu-Zn] (sodA) (Emericella nidulans (strain FGSC A4 / ATCC 38163 / CBS 112.46 / NRRL 194 / M139) (Aspergillus nidulans)).